Here is a 218-residue protein sequence, read N- to C-terminus: Glutathione S-transferase Mu 2 (218 aa).

The region spanning 2–88 (PIILGYWNIR…YIARKHNLCG (87 aa)) is the GST N-terminal domain. Glutathione is bound at residue 7 to 8 (YW). Ser-27 and Ser-44 each carry phosphoserine. Residues 43–46 (RSQW), Lys-50, 59–60 (NL), and 72–73 (QS) contribute to the glutathione site. The GST C-terminal domain occupies 90–208 (TEKEKIQEDI…KSSRFLPRPV (119 aa)). Residue Tyr-116 coordinates substrate.

This sequence belongs to the GST superfamily. Mu family. In terms of assembly, homodimer.

The protein resides in the cytoplasm. The catalysed reaction is RX + glutathione = an S-substituted glutathione + a halide anion + H(+). It catalyses the reaction 11(S)-hydroxy-14(S),15(S)-epoxy-(5Z,8Z,12E)-eicosatrienoate + glutathione = (11S,15S)-dihydroxy-14(R)-S-glutathionyl-(5Z,8Z,12E)-eicosatrienoate. Conjugation of reduced glutathione to a wide number of exogenous and endogenous hydrophobic electrophiles. Participates in the formation of novel hepoxilin regioisomers. In Pongo abelii (Sumatran orangutan), this protein is Glutathione S-transferase Mu 2 (GSTM2).